A 148-amino-acid chain; its full sequence is Large ribosomal subunit protein bL9 (148 aa).

The protein belongs to the bacterial ribosomal protein bL9 family.

Its function is as follows. Binds to the 23S rRNA. The polypeptide is Large ribosomal subunit protein bL9 (Marinobacter nauticus (strain ATCC 700491 / DSM 11845 / VT8) (Marinobacter aquaeolei)).